Here is a 620-residue protein sequence, read N- to C-terminus: 1-deoxy-D-xylulose-5-phosphate synthase (620 aa).

Thiamine diphosphate is bound by residues His80 and 121–123 (GHS). Asp152 is a Mg(2+) binding site. Thiamine diphosphate-binding positions include 153 to 154 (GA), Asn181, Tyr288, and Glu370. Mg(2+) is bound at residue Asn181.

The protein belongs to the transketolase family. DXPS subfamily. Homodimer. Requires Mg(2+) as cofactor. The cofactor is thiamine diphosphate.

The enzyme catalyses D-glyceraldehyde 3-phosphate + pyruvate + H(+) = 1-deoxy-D-xylulose 5-phosphate + CO2. The protein operates within metabolic intermediate biosynthesis; 1-deoxy-D-xylulose 5-phosphate biosynthesis; 1-deoxy-D-xylulose 5-phosphate from D-glyceraldehyde 3-phosphate and pyruvate: step 1/1. Catalyzes the acyloin condensation reaction between C atoms 2 and 3 of pyruvate and glyceraldehyde 3-phosphate to yield 1-deoxy-D-xylulose-5-phosphate (DXP). The sequence is that of 1-deoxy-D-xylulose-5-phosphate synthase from Escherichia coli O7:K1 (strain IAI39 / ExPEC).